The primary structure comprises 542 residues: Membrane protein insertase YidC (542 aa).

A helical transmembrane segment spans residues 5–25; sequence TLLAVILSITVFYVFSLLFAP. The tract at residues 33 to 64 is disordered; that stretch reads ESTGQAVSAPVSAGQPVAGGVQPSASAPSLPA. Over residues 54-64 the composition is skewed to low complexity; that stretch reads QPSASAPSLPA. Helical transmembrane passes span 323–343, 345–365, 419–439, 463–483, and 500–520; these read LDLGWFTVIAKPLLYTLKYFY, YVGNYGVAIIIITIILKALFF, LPMLVQIPVFFALYKALMFSI, MLGLPFVIGPLPLLMGATMFI, and MLALPVVFTFMFLNFPSGLVL.

Belongs to the OXA1/ALB3/YidC family. Type 1 subfamily. Interacts with the Sec translocase complex via SecD. Specifically interacts with transmembrane segments of nascent integral membrane proteins during membrane integration.

Its subcellular location is the cell inner membrane. Its function is as follows. Required for the insertion and/or proper folding and/or complex formation of integral membrane proteins into the membrane. Involved in integration of membrane proteins that insert both dependently and independently of the Sec translocase complex, as well as at least some lipoproteins. Aids folding of multispanning membrane proteins. The protein is Membrane protein insertase YidC of Pelobacter propionicus (strain DSM 2379 / NBRC 103807 / OttBd1).